We begin with the raw amino-acid sequence, 362 residues long: Forkhead box protein F (362 aa).

Residues 19–70 form a disordered region; that stretch reads LDSTAPNNSHRTIKAENYFNEDEEDYNENSHEDSEDSKEDSDGQGCRSRKRK. The span at 37–57 shows a compositional bias: acidic residues; that stretch reads FNEDEEDYNENSHEDSEDSKE. Residues 72-169 constitute a DNA-binding region (fork-head); it reads KPPFSYIALI…EENGFRRRPR (98 aa).

The protein resides in the nucleus. In terms of biological role, transcription factor that is required for cell fate of coelomocytes which are non-muscle mesodermal cells. Acts in concert with, and by activating expression of, the homeodomain gene ceh-34. Binds to the sequence motif 5'-ATAAA[T/C]A-3'. In Caenorhabditis elegans, this protein is Forkhead box protein F.